A 373-amino-acid polypeptide reads, in one-letter code: 4-hydroxy-3-methylbut-2-en-1-yl diphosphate synthase (flavodoxin) (373 aa).

C270, C273, C305, and E312 together coordinate [4Fe-4S] cluster.

Belongs to the IspG family. It depends on [4Fe-4S] cluster as a cofactor.

The enzyme catalyses (2E)-4-hydroxy-3-methylbut-2-enyl diphosphate + oxidized [flavodoxin] + H2O + 2 H(+) = 2-C-methyl-D-erythritol 2,4-cyclic diphosphate + reduced [flavodoxin]. It functions in the pathway isoprenoid biosynthesis; isopentenyl diphosphate biosynthesis via DXP pathway; isopentenyl diphosphate from 1-deoxy-D-xylulose 5-phosphate: step 5/6. Converts 2C-methyl-D-erythritol 2,4-cyclodiphosphate (ME-2,4cPP) into 1-hydroxy-2-methyl-2-(E)-butenyl 4-diphosphate. This is 4-hydroxy-3-methylbut-2-en-1-yl diphosphate synthase (flavodoxin) from Vibrio atlanticus (strain LGP32) (Vibrio splendidus (strain Mel32)).